Reading from the N-terminus, the 367-residue chain is Homoserine O-acetyltransferase (367 aa).

Residues 44 to 350 (NVIMVEHAWT…AYGHDAFLLE (307 aa)) enclose the AB hydrolase-1 domain. The active-site Nucleophile is the Ser-150. Arg-217 lines the substrate pocket. Active-site residues include Asp-311 and His-344. Asp-345 contacts substrate.

This sequence belongs to the AB hydrolase superfamily. MetX family. Homodimer.

The protein localises to the cytoplasm. The catalysed reaction is L-homoserine + acetyl-CoA = O-acetyl-L-homoserine + CoA. It participates in amino-acid biosynthesis; L-methionine biosynthesis via de novo pathway; O-acetyl-L-homoserine from L-homoserine: step 1/1. Its function is as follows. Transfers an acetyl group from acetyl-CoA to L-homoserine, forming acetyl-L-homoserine. In vitro, can also use propionyl-CoA or butiryl-CoA as acyl donor. The chain is Homoserine O-acetyltransferase from Trichlorobacter lovleyi (strain ATCC BAA-1151 / DSM 17278 / SZ) (Geobacter lovleyi).